We begin with the raw amino-acid sequence, 879 residues long: Phosphoenolpyruvate carboxylase (879 aa).

Catalysis depends on residues histidine 138 and lysine 546.

The protein belongs to the PEPCase type 1 family. The cofactor is Mg(2+).

The catalysed reaction is oxaloacetate + phosphate = phosphoenolpyruvate + hydrogencarbonate. Functionally, forms oxaloacetate, a four-carbon dicarboxylic acid source for the tricarboxylic acid cycle. The protein is Phosphoenolpyruvate carboxylase of Pectobacterium carotovorum subsp. carotovorum (strain PC1).